The primary structure comprises 310 residues: Ribosomal RNA small subunit methyltransferase H (310 aa).

S-adenosyl-L-methionine contacts are provided by residues 35–37, Asp-52, Phe-79, Asp-100, and Gln-107; that span reads GGH.

Belongs to the methyltransferase superfamily. RsmH family.

It is found in the cytoplasm. The catalysed reaction is cytidine(1402) in 16S rRNA + S-adenosyl-L-methionine = N(4)-methylcytidine(1402) in 16S rRNA + S-adenosyl-L-homocysteine + H(+). In terms of biological role, specifically methylates the N4 position of cytidine in position 1402 (C1402) of 16S rRNA. In Anaeromyxobacter sp. (strain K), this protein is Ribosomal RNA small subunit methyltransferase H.